The chain runs to 284 residues: Shikimate dehydrogenase (NADP(+)) (284 aa).

Residues Ser20–Ser22 and Ser67 contribute to the shikimate site. Lys71 acts as the Proton acceptor in catalysis. Asp83 contacts NADP(+). Residues Asn92 and Asp107 each coordinate shikimate. Residues Gly129–Ala133 and Ile227 contribute to the NADP(+) site. A shikimate-binding site is contributed by Tyr229. Gly250 lines the NADP(+) pocket.

This sequence belongs to the shikimate dehydrogenase family. In terms of assembly, homodimer.

The catalysed reaction is shikimate + NADP(+) = 3-dehydroshikimate + NADPH + H(+). Its pathway is metabolic intermediate biosynthesis; chorismate biosynthesis; chorismate from D-erythrose 4-phosphate and phosphoenolpyruvate: step 4/7. Functionally, involved in the biosynthesis of the chorismate, which leads to the biosynthesis of aromatic amino acids. Catalyzes the reversible NADPH linked reduction of 3-dehydroshikimate (DHSA) to yield shikimate (SA). This chain is Shikimate dehydrogenase (NADP(+)), found in Streptococcus pneumoniae serotype 2 (strain D39 / NCTC 7466).